Reading from the N-terminus, the 425-residue chain is Enolase (425 aa).

Residue glutamine 163 participates in (2R)-2-phosphoglycerate binding. Glutamate 205 functions as the Proton donor in the catalytic mechanism. Mg(2+)-binding residues include aspartate 242, glutamate 285, and aspartate 312. Lysine 337, arginine 366, serine 367, and lysine 388 together coordinate (2R)-2-phosphoglycerate. Lysine 337 functions as the Proton acceptor in the catalytic mechanism.

Belongs to the enolase family. The cofactor is Mg(2+).

It localises to the cytoplasm. The protein localises to the secreted. It is found in the cell surface. The catalysed reaction is (2R)-2-phosphoglycerate = phosphoenolpyruvate + H2O. It functions in the pathway carbohydrate degradation; glycolysis; pyruvate from D-glyceraldehyde 3-phosphate: step 4/5. Functionally, catalyzes the reversible conversion of 2-phosphoglycerate (2-PG) into phosphoenolpyruvate (PEP). It is essential for the degradation of carbohydrates via glycolysis. This chain is Enolase, found in Acidiphilium cryptum (strain JF-5).